Consider the following 937-residue polypeptide: Isoleucine--tRNA ligase (937 aa).

The 'HIGH' region motif lies at 58–68; it reads PYANGSIHIGH. Glutamate 561 serves as a coordination point for L-isoleucyl-5'-AMP. The 'KMSKS' region signature appears at 602 to 606; the sequence is KMSKS. Lysine 605 is a binding site for ATP. Cysteine 900, cysteine 903, cysteine 920, and cysteine 923 together coordinate Zn(2+).

Belongs to the class-I aminoacyl-tRNA synthetase family. IleS type 1 subfamily. In terms of assembly, monomer. Zn(2+) serves as cofactor.

The protein resides in the cytoplasm. It catalyses the reaction tRNA(Ile) + L-isoleucine + ATP = L-isoleucyl-tRNA(Ile) + AMP + diphosphate. Its function is as follows. Catalyzes the attachment of isoleucine to tRNA(Ile). As IleRS can inadvertently accommodate and process structurally similar amino acids such as valine, to avoid such errors it has two additional distinct tRNA(Ile)-dependent editing activities. One activity is designated as 'pretransfer' editing and involves the hydrolysis of activated Val-AMP. The other activity is designated 'posttransfer' editing and involves deacylation of mischarged Val-tRNA(Ile). The sequence is that of Isoleucine--tRNA ligase from Pectobacterium atrosepticum (strain SCRI 1043 / ATCC BAA-672) (Erwinia carotovora subsp. atroseptica).